We begin with the raw amino-acid sequence, 201 residues long: MALHDENVVWHSHPVTVAAREQLHGHRGVVLWFTGLSGSGKSTVAGALEEALHQRGVSTYLLDGDNVRYGLCRDLGFSDADRQENIRRVGEVASLMADAGLIVLTAFISPHRAERQLVKERVGHDRFIEIYVNTPLAICEQRDPKGLYKKARAGELRNFTGIDAIYEAPDSPQVHLNGEQLVTNLVSQLLDLLRRRDIIRS.

35 to 42 (GLSGSGKS) serves as a coordination point for ATP. Ser109 (phosphoserine intermediate) is an active-site residue.

It belongs to the APS kinase family.

It catalyses the reaction adenosine 5'-phosphosulfate + ATP = 3'-phosphoadenylyl sulfate + ADP + H(+). Its pathway is sulfur metabolism; hydrogen sulfide biosynthesis; sulfite from sulfate: step 2/3. Functionally, catalyzes the synthesis of activated sulfate. This is Adenylyl-sulfate kinase from Salmonella gallinarum (strain 287/91 / NCTC 13346).